We begin with the raw amino-acid sequence, 108 residues long: MLKTTLLFVVTALAEIIGCFLPYLWLRKGGSIWLLLPAALSLALFAWLLTLHPTASGRVYAAYGGVYVAVALLWLYWVDGVKLSAYDWAGAAVALLGMAIIAMGWQRS.

4 consecutive transmembrane segments (helical) span residues 6 to 26, 31 to 51, 61 to 81, and 85 to 105; these read LLFVVTALAEIIGCFLPYLWL, SIWLLLPAALSLALFAWLLTL, AAYGGVYVAVALLWLYWVDGV, and AYDWAGAAVALLGMAIIAMGW.

The protein belongs to the UPF0060 family.

The protein localises to the cell inner membrane. In Cellvibrio japonicus (strain Ueda107) (Pseudomonas fluorescens subsp. cellulosa), this protein is UPF0060 membrane protein CJA_3703.